Here is a 244-residue protein sequence, read N- to C-terminus: 3-oxoacyl-[acyl-carrier-protein] reductase FabG (244 aa).

NADP(+) contacts are provided by residues 12 to 15 and threonine 37; that span reads GASR. 2 residues coordinate Ca(2+): glycine 50 and glycine 53. Residues 59 to 60 and asparagine 86 each bind NADP(+); that span reads NV. Serine 138 is a binding site for substrate. Position 145 (asparagine 145) interacts with Ca(2+). The active-site Proton acceptor is the tyrosine 151. Residues 151 to 155 and isoleucine 184 each bind NADP(+); that span reads YAAAK. Ca(2+) contacts are provided by glutamate 233 and threonine 234.

It belongs to the short-chain dehydrogenases/reductases (SDR) family. As to quaternary structure, homotetramer.

It carries out the reaction a (3R)-hydroxyacyl-[ACP] + NADP(+) = a 3-oxoacyl-[ACP] + NADPH + H(+). It catalyses the reaction 3-oxobutanoyl-[ACP] + NADPH + H(+) = (3R)-hydroxybutanoyl-[ACP] + NADP(+). The catalysed reaction is 3-oxopentanoyl-[ACP] + NADPH + H(+) = (3R)-hydroxypentanoyl-[ACP] + NADP(+). The enzyme catalyses 3-oxohexanoyl-[ACP] + NADPH + H(+) = (3R)-hydroxyhexanoyl-[ACP] + NADP(+). It carries out the reaction 3-oxoheptanoyl-[ACP] + NADPH + H(+) = (3R)-hydroxyheptanoyl-[ACP] + NADP(+). It catalyses the reaction 3-oxooctanoyl-[ACP] + NADPH + H(+) = (3R)-hydroxyoctanoyl-[ACP] + NADP(+). The catalysed reaction is 3-oxononanoyl-[ACP] + NADPH + H(+) = (3R)-hydroxynonanoyl-[ACP] + NADP(+). The enzyme catalyses 3-oxodecanoyl-[ACP] + NADPH + H(+) = (3R)-hydroxydecanoyl-[ACP] + NADP(+). It carries out the reaction 3-oxohexadecanoyl-[ACP] + NADPH + H(+) = (3R)-hydroxyhexadecanoyl-[ACP] + NADP(+). It catalyses the reaction 3-oxo-(9Z)-hexadecenoyl-[ACP] + NADPH + H(+) = (3R)-hydroxy-(9Z)-hexadecenoyl-[ACP] + NADP(+). The catalysed reaction is 4-methyl-3-oxopentanoyl-[ACP] + NADPH + H(+) = (3R)-hydroxy-4-methylpentanoyl-[ACP] + NADP(+). The enzyme catalyses 5-methyl-3-oxohexanoyl-[ACP] + NADPH + H(+) = (3R)-hydroxy-5-methylhexanoyl-[ACP] + NADP(+). It carries out the reaction 4-methyl-3-oxohexanoyl-[ACP] + NADPH + H(+) = (3R)-hydroxy-4-methylhexanoyl-[ACP] + NADP(+). It functions in the pathway lipid metabolism; fatty acid biosynthesis. Inhibited by cinnamic acid derivatives. Functionally, catalyzes the NADPH-dependent reduction of beta-ketoacyl-ACP substrates to beta-hydroxyacyl-ACP products, the first reductive step in the elongation cycle of fatty acid biosynthesis. This is 3-oxoacyl-[acyl-carrier-protein] reductase FabG (fabG) from Escherichia coli (strain K12).